We begin with the raw amino-acid sequence, 359 residues long: Insulin gene enhancer protein ISL-2 (359 aa).

LIM zinc-binding domains are found at residues 25-86 (AMCV…RLFG) and 87-149 (IKCA…LLER). The disordered stretch occupies residues 151–191 (AAGSPRSPGPLPGARGLHLPDAGSGRQPALRPHVHKQTEKT). A phosphoserine mark is found at Ser154 and Ser157. The segment at residues 191–250 (TTRVRTVLNEKQLHTLRTCYAANPRPDALMKEQLVEMTGLSPRVIRVWFQNKRCKDKKKS) is a DNA-binding region (homeobox). The LIM-binding domain (LID) stretch occupies residues 272-301 (GTPLVAGSPIRHENAVQGSAVEVQTYQPPW). At Ser279 the chain carries Phosphoserine. Residues 326–336 (ESGSLGNSSGS) show a composition bias toward low complexity. Residues 326 to 359 (ESGSLGNSSGSDVTSLSSQLPDTPNSMVPSPVET) are disordered. Positions 337 to 359 (DVTSLSSQLPDTPNSMVPSPVET) are enriched in polar residues.

In terms of assembly, interacts with LHX4.

It localises to the nucleus. Functionally, transcriptional factor that defines subclasses of motoneurons that segregate into columns in the spinal cord and select distinct axon pathways. The polypeptide is Insulin gene enhancer protein ISL-2 (ISL2) (Homo sapiens (Human)).